The following is a 479-amino-acid chain: Neuronal acetylcholine receptor subunit alpha-9 (479 aa).

Residues 1-25 (MNRPHSCLSFCWMYFAASGIRAVET) form the signal peptide. Topologically, residues 26–237 (ANGKYAQKLF…TFTLLLKRRS (212 aa)) are extracellular. N-linked (GlcNAc...) asparagine glycosylation is present at Asn-57. The cysteines at positions 155 and 169 are disulfide-linked. An N-linked (GlcNAc...) asparagine glycan is attached at Asn-170. 2 residues coordinate Na(+): Ser-191 and Asp-193. Cysteines 219 and 220 form a disulfide. 3 consecutive transmembrane segments (helical) span residues 238–262 (SFYIVNLLIPCVLISFLAPLSFYLP), 269–287 (VSLGVTILLAMTVFQLMVA), and 302–323 (YYIATMALITASTALTIMVMNI). The Cytoplasmic portion of the chain corresponds to 324-457 (HFCGAEARPV…WKKVAKVIDR (134 aa)). The chain crosses the membrane as a helical span at residues 458–476 (FFMWIFFAMVFVMTVLIIA).

It belongs to the ligand-gated ion channel (TC 1.A.9) family. Acetylcholine receptor (TC 1.A.9.1) subfamily. Alpha-9/CHRNA9 sub-subfamily. As to quaternary structure, forms homo- or heterooligomeric channels in conjunction with CHRNA10. The native outer hair cell receptor may be composed of CHRNA9:CHRNA10 heterooligomers. Found in the stoichiometric form (CHRNA9)2:(CHRNA10)3. As to expression, detected in the nasal epithelium, in the outer hair cells of the cochlea, in the pars tuberalis of the hypophysis, and in the developing muscle of the tongue. Also expressed in the neurons of dorsal root ganglia.

The protein resides in the synaptic cell membrane. It is found in the cell membrane. It carries out the reaction Ca(2+)(in) = Ca(2+)(out). It catalyses the reaction Mg(2+)(in) = Mg(2+)(out). The enzyme catalyses K(+)(in) = K(+)(out). The catalysed reaction is Na(+)(in) = Na(+)(out). Its activity is regulated as follows. Activated by a myriad of ligands such as acetylcholine. AChR activity is inhibited by the antagonist alpha-conotoxins RgIA and GeXXA, small disulfide-constrained peptides from cone snails. In terms of biological role, component of neuronal acetylcholine receptors (nAChRs) that function as pentameric, ligand-gated cation channels with high calcium permeability among other activities. nAChRs are excitatory neurotrasnmitter receptors formed by a collection of nAChR subunits known to mediate synaptic transmission in the nervous system and the neuromuscular junction. Each nAchR subunit confers differential attributes to channel properties, including activation, deactivation and desensitization kinetics, pH sensitivity, cation permeability, and binding to allosteric modulators. Forms either homopentamers or heteropentamers with CHRNA10. Expressed in the inner ear, in sympathetic neurons and in other non-neuronal cells, such as skin keratinocytes and lymphocytes. nAChR formed by CHRNA9:CHRNA10 mediate central nervous system control of auditory and vestibular sensory processing. The channel is permeable to a range of divalent cations including calcium, the influx of which may activate a potassium current which hyperpolarizes the cell membrane. In the ear, mediates synaptic transmission between efferent olivocochlear fibers and hair cells of the cochlea, this may lead to a reduction in basilar membrane motion, altering the activity of auditory nerve fibers and reducing the range of dynamic hearing. This may protect against acoustic trauma. May also regulate keratinocyte adhesion. The sequence is that of Neuronal acetylcholine receptor subunit alpha-9 (Chrna9) from Rattus norvegicus (Rat).